The primary structure comprises 200 residues: NAD(P)H dehydrogenase (quinone) (200 aa).

In terms of domain architecture, Flavodoxin-like spans 4-190 (VLVLYYSTYG…DGARFQGRLV (187 aa)). FMN-binding positions include 10–15 (STYGHL) and 78–80 (TRF). Y12 is a binding site for NAD(+). Position 98 (W98) interacts with substrate. FMN contacts are provided by residues 113-119 (STATQHG) and H134.

The protein belongs to the WrbA family. FMN serves as cofactor.

It catalyses the reaction a quinone + NADH + H(+) = a quinol + NAD(+). It carries out the reaction a quinone + NADPH + H(+) = a quinol + NADP(+). The protein is NAD(P)H dehydrogenase (quinone) of Acidovorax ebreus (strain TPSY) (Diaphorobacter sp. (strain TPSY)).